The chain runs to 51 residues: Large ribosomal subunit protein bL33 (51 aa).

Belongs to the bacterial ribosomal protein bL33 family.

The chain is Large ribosomal subunit protein bL33 from Psychrobacter sp. (strain PRwf-1).